Here is a 255-residue protein sequence, read N- to C-terminus: tRNA (guanine-N(1)-)-methyltransferase (255 aa).

Residues glycine 117 and 137–142 (LGDFVL) contribute to the S-adenosyl-L-methionine site.

This sequence belongs to the RNA methyltransferase TrmD family. Homodimer.

The protein localises to the cytoplasm. It carries out the reaction guanosine(37) in tRNA + S-adenosyl-L-methionine = N(1)-methylguanosine(37) in tRNA + S-adenosyl-L-homocysteine + H(+). Specifically methylates guanosine-37 in various tRNAs. The chain is tRNA (guanine-N(1)-)-methyltransferase from Paracidovorax citrulli (strain AAC00-1) (Acidovorax citrulli).